We begin with the raw amino-acid sequence, 123 residues long: Large ribosomal subunit protein bL12 (123 aa).

This sequence belongs to the bacterial ribosomal protein bL12 family. As to quaternary structure, homodimer. Part of the ribosomal stalk of the 50S ribosomal subunit. Forms a multimeric L10(L12)X complex, where L10 forms an elongated spine to which 2 to 4 L12 dimers bind in a sequential fashion. Binds GTP-bound translation factors.

In terms of biological role, forms part of the ribosomal stalk which helps the ribosome interact with GTP-bound translation factors. Is thus essential for accurate translation. In Geobacillus kaustophilus (strain HTA426), this protein is Large ribosomal subunit protein bL12.